The primary structure comprises 336 residues: HTH-type transcriptional repressor PurR (336 aa).

Residues 2-56 (ATIKDVAKMAGVSTTTVSHVINKTRFVAKDTEEAVLSAIKQLNYSPSAVARSLKV) enclose the HTH lacI-type domain. A DNA-binding region (H-T-H motif) is located at residues 4–23 (IKDVAKMAGVSTTTVSHVIN). A DNA-binding region spans residues 48 to 56 (SAVARSLKV). Hypoxanthine contacts are provided by tyrosine 73, lysine 188, threonine 190, phenylalanine 219, and aspartate 273.

As to quaternary structure, homodimer.

Its pathway is purine metabolism; purine nucleotide biosynthesis [regulation]. Its function is as follows. Is the main repressor of the genes involved in the de novo synthesis of purine nucleotides, regulating purB, purC, purEK, purF, purHD, purL, purMN and guaBA expression. PurR is allosterically activated to bind its cognate DNA by binding the purine corepressors, hypoxanthine or guanine, thereby effecting transcription repression. This Haemophilus influenzae (strain 86-028NP) protein is HTH-type transcriptional repressor PurR.